The chain runs to 278 residues: Potassium/proton antiporter CemA (278 aa).

4 helical membrane-spanning segments follow: residues 61 to 81 (VVFLFIIPVLINQVSKSFLFG), 154 to 174 (CAITNILADLLSIAIFISILI), 203 to 223 (IILFTDMFVGFHSPHGWEVII), and 238 to 258 (FIFVFISTFPVILDTIFKYWI).

It belongs to the CemA family.

The protein localises to the plastid. The protein resides in the chloroplast inner membrane. It carries out the reaction K(+)(in) + H(+)(out) = K(+)(out) + H(+)(in). Its function is as follows. Contributes to K(+)/H(+) antiport activity by supporting proton efflux to control proton extrusion and homeostasis in chloroplasts in a light-dependent manner to modulate photosynthesis. Prevents excessive induction of non-photochemical quenching (NPQ) under continuous-light conditions. Indirectly promotes efficient inorganic carbon uptake into chloroplasts. The protein is Potassium/proton antiporter CemA of Gracilaria tenuistipitata var. liui (Red alga).